A 198-amino-acid chain; its full sequence is MAELEAKKVEIVDPAPPAPGPVEAPKEVVADEKAIVAPALPPPAEEKEKPDDSKALVVVETKAPEPADEKKEGSIDRDAVLARVATEKRVSLIKAWEESEKSKAENKAQKKVSAIGAWENSKKANLEAELKKMEEQLEKKKAEYTEKMKNKIALLHKEAEEKRAMIEAKRGEDLLKAEELAAKYRATGTAPKKILGIF.

The segment covering Met1–Ile11 has biased composition (basic and acidic residues). The disordered stretch occupies residues Met1–Ala24. The stretch at Glu97–Tyr184 forms a coiled coil.

This sequence belongs to the remorin family. In terms of processing, the N-terminus is blocked. Phosphorylated.

The protein localises to the cell membrane. Its function is as follows. Binds to both simple and complex galacturonides. May be involved in cell-to-cell signaling and molecular transport. This chain is Remorin, found in Solanum tuberosum (Potato).